The sequence spans 147 residues: MVHLTGEEKSAVTTLWGKVNVDEVGGEALGRLLVVYPWTQRFFESFGDLSSPDAVMNNPKVKAHGKKVLGAFSDGLTHLDNLKGTFAQLSELHCDKLHVDPENFRLLGNVLVCVLAHHFGKEFTPTVQAAYQKVVAGVANALAHKYH.

N-acetylvaline is present on Val-2. Residues His-3–His-147 enclose the Globin domain. Thr-13 is subject to Phosphothreonine. A Phosphoserine modification is found at Ser-45. Lys-60 carries the N6-acetyllysine modification. His-64 lines the heme b pocket. At Lys-83 the chain carries N6-acetyllysine. His-93 is a binding site for heme b. Residue Cys-94 is modified to S-nitrosocysteine. Lys-145 is modified (N6-acetyllysine).

Belongs to the globin family. As to quaternary structure, heterotetramer of two alpha chains and two beta chains. As to expression, red blood cells.

Functionally, involved in oxygen transport from the lung to the various peripheral tissues. In Callimico goeldii (Goeldi's marmoset), this protein is Hemoglobin subunit beta (HBB).